A 367-amino-acid chain; its full sequence is Uroporphyrinogen decarboxylase (367 aa).

Methionine 1 carries the post-translational modification N-acetylmethionine. Coproporphyrinogen I-binding residues include arginine 37, alanine 39, arginine 41, arginine 50, aspartate 86, tyrosine 164, serine 219, and histidine 339. Residues arginine 37, alanine 39, and arginine 41 each coordinate coproporphyrinogen III. 4 residues coordinate coproporphyrinogen III: aspartate 86, tyrosine 164, serine 219, and histidine 339.

The protein belongs to the uroporphyrinogen decarboxylase family. In terms of assembly, homodimer.

It is found in the cytoplasm. The protein localises to the cytosol. The catalysed reaction is uroporphyrinogen III + 4 H(+) = coproporphyrinogen III + 4 CO2. It catalyses the reaction uroporphyrinogen I + 4 H(+) = coproporphyrinogen I + 4 CO2. It participates in porphyrin-containing compound metabolism; protoporphyrin-IX biosynthesis; coproporphyrinogen-III from 5-aminolevulinate: step 4/4. Catalyzes the sequential decarboxylation of the four acetate side chains of uroporphyrinogen to form coproporphyrinogen and participates in the fifth step in the heme biosynthetic pathway. Isomer I or isomer III of uroporphyrinogen may serve as substrate, but only coproporphyrinogen III can ultimately be converted to heme. In vitro also decarboxylates pentacarboxylate porphyrinogen I. The sequence is that of Uroporphyrinogen decarboxylase from Mus musculus (Mouse).